The sequence spans 437 residues: GTPase HflX (437 aa).

The segment at 150-173 (DRQGGGSGGGKGGGGAARGEGEKQ) is disordered. A compositionally biased stretch (gly residues) spans 152–167 (QGGGSGGGKGGGGAAR). Positions 212 to 382 (ATAAIVGYTN…ACVEMLESRV (171 aa)) constitute a Hflx-type G domain. GTP is bound by residues 218–225 (GYTNAGKS), 243–247 (FATLD), 265–268 (DTVG), 331–334 (NKVD), and 360–362 (SVK). Residues S225 and T245 each coordinate Mg(2+).

Belongs to the TRAFAC class OBG-HflX-like GTPase superfamily. HflX GTPase family. In terms of assembly, monomer. Associates with the 50S ribosomal subunit. Mg(2+) is required as a cofactor.

The protein resides in the cytoplasm. In terms of biological role, GTPase that associates with the 50S ribosomal subunit and may have a role during protein synthesis or ribosome biogenesis. This is GTPase HflX from Akkermansia muciniphila (strain ATCC BAA-835 / DSM 22959 / JCM 33894 / BCRC 81048 / CCUG 64013 / CIP 107961 / Muc).